The chain runs to 306 residues: 3-methyl-2-oxobutanoate hydroxymethyltransferase (306 aa).

Positions 53 and 96 each coordinate Mg(2+). 3-methyl-2-oxobutanoate is bound by residues 53-54 (DS), aspartate 96, and lysine 126. Glutamate 128 is a binding site for Mg(2+). Catalysis depends on glutamate 195, which acts as the Proton acceptor.

This sequence belongs to the PanB family. Homodecamer; pentamer of dimers. It depends on Mg(2+) as a cofactor.

The protein localises to the cytoplasm. It catalyses the reaction 3-methyl-2-oxobutanoate + (6R)-5,10-methylene-5,6,7,8-tetrahydrofolate + H2O = 2-dehydropantoate + (6S)-5,6,7,8-tetrahydrofolate. Its pathway is cofactor biosynthesis; (R)-pantothenate biosynthesis; (R)-pantoate from 3-methyl-2-oxobutanoate: step 1/2. In terms of biological role, catalyzes the reversible reaction in which hydroxymethyl group from 5,10-methylenetetrahydrofolate is transferred onto alpha-ketoisovalerate to form ketopantoate. This Anaeromyxobacter dehalogenans (strain 2CP-1 / ATCC BAA-258) protein is 3-methyl-2-oxobutanoate hydroxymethyltransferase.